The sequence spans 130 residues: HTH-type transcriptional repressor YtrA (130 aa).

The region spanning 10-78 is the HTH gntR-type domain; the sequence is TPIYEQIIQQ…RGRGTYISEN (69 aa). A DNA-binding region (H-T-H motif) is located at residues 38 to 57; sequence VRELATIIIANPNTVSKAYK.

Negatively regulates ABC transporter complex ytrBCDEF that plays a role in acetoin utilization during stationary phase and sporulation. This Bacillus subtilis (strain 168) protein is HTH-type transcriptional repressor YtrA (ytrA).